The following is a 405-amino-acid chain: DNA primase DnaG (405 aa).

The region spanning 172-248 is the Toprim domain; sequence DAIIIVEGRA…HVDYIARAPP (77 aa). The Mg(2+) site is built by Glu-178, Asp-222, and Asp-224. Residues 279–303 form a disordered region; sequence ASGERAEAPPQPAQQPQQEQPAPQR. Residues 292-303 are compositionally biased toward low complexity; sequence QQPQQEQPAPQR.

It belongs to the archaeal DnaG primase family. As to quaternary structure, forms a ternary complex with MCM helicase and DNA. Component of the archaeal exosome complex. It depends on Mg(2+) as a cofactor.

It carries out the reaction ssDNA + n NTP = ssDNA/pppN(pN)n-1 hybrid + (n-1) diphosphate.. RNA polymerase that catalyzes the synthesis of short RNA molecules used as primers for DNA polymerase during DNA replication. Also part of the exosome, which is a complex involved in RNA degradation. Acts as a poly(A)-binding protein that enhances the interaction between heteromeric, adenine-rich transcripts and the exosome. The sequence is that of DNA primase DnaG from Pyrobaculum arsenaticum (strain DSM 13514 / JCM 11321 / PZ6).